Reading from the N-terminus, the 568-residue chain is Sphingosine-1-phosphate lyase 1 (568 aa).

The Lumenal segment spans residues 1-41; it reads MPSTDLLTLKAFEPYLEILEVYSTKAKNYVNGHCTKYEPWQ. The helical; Signal-anchor for type III membrane protein transmembrane segment at 42–62 threads the bilayer; that stretch reads LIAWSVVWTLLIVWGYEFVFQ. Over 63-568 the chain is Cytoplasmic; the sequence is PESLWSRFKK…SQMNGSPKPH (506 aa). The residue at position 353 (Lys-353) is an N6-(pyridoxal phosphate)lysine; alternate. At Lys-353 the chain carries N6-acetyllysine; alternate. 2 positions are modified to 3'-nitrotyrosine: Tyr-356 and Tyr-366. Phosphoserine is present on Ser-564.

This sequence belongs to the group II decarboxylase family. Sphingosine-1-phosphate lyase subfamily. As to quaternary structure, homodimer. Pyridoxal 5'-phosphate is required as a cofactor.

It is found in the endoplasmic reticulum membrane. The catalysed reaction is sphinganine 1-phosphate = hexadecanal + phosphoethanolamine. It catalyses the reaction sphing-4-enine 1-phosphate = (2E)-hexadecenal + phosphoethanolamine. It participates in lipid metabolism; sphingolipid metabolism. Functionally, cleaves phosphorylated sphingoid bases (PSBs), such as sphingosine-1-phosphate, into fatty aldehydes and phosphoethanolamine. Elevates stress-induced ceramide production and apoptosis. Required for global lipid homeostasis in liver and cholesterol homeostasis in fibroblasts. Involved in the regulation of pro-inflammatory response and neutrophil trafficking. Modulates neuronal autophagy via phosphoethanolamine production which regulates accumulation of aggregate-prone proteins such as APP. Seems to play a role in establishing neuronal contact sites and axonal maintenance. In Pongo abelii (Sumatran orangutan), this protein is Sphingosine-1-phosphate lyase 1.